Here is a 522-residue protein sequence, read N- to C-terminus: Maturase K (522 aa).

This sequence belongs to the intron maturase 2 family. MatK subfamily.

It localises to the plastid. The protein localises to the chloroplast. Its function is as follows. Usually encoded in the trnK tRNA gene intron. Probably assists in splicing its own and other chloroplast group II introns. The protein is Maturase K of Iris tenax (Oregon iris).